The sequence spans 377 residues: MNDAIPRPQAKTRKALTPLLEIRNLTKSYDGQHAVDDVSLTIYKGEIFALLGASGCGKSTLLRMLAGFEQPSAGQIMLDGVDLSQVPPYLRPINMMFQSYALFPHMTVEQNIAFGLKQDKLPKAEIASRVNEMLGLVHMQEFAKRKPHQLSGGQRQRVALARSLAKRPKLLLLDEPMGALDKKLRDRMQLEVVDILERVGVTCVMVTHDQEEAMTMAGRIAIMNRGKFVQIGEPEEIYEHPTTRYSAEFIGSVNVFEGVLKERQEDGLVLDSPGLVHPLKVDADASVVDNVPVHVALRPEKIMLCEEPPANGCNFAVGEVIHIAYLGDLSVYHVRLKSGQMISAQLQNAHRHRKGLPTWGDEVRLCWEVDSCVVLTV.

The ABC transporter domain maps to 20 to 250 (LEIRNLTKSY…PTTRYSAEFI (231 aa)). Residue 52–59 (GASGCGKS) participates in ATP binding.

This sequence belongs to the ABC transporter superfamily. The complex is composed of two ATP-binding proteins (PotG), two transmembrane proteins (PotH and PotI) and a solute-binding protein (PotF).

The protein localises to the cell inner membrane. It carries out the reaction putrescine(out) + ATP + H2O = putrescine(in) + ADP + phosphate + H(+). Transport is feedback inhibited by intracellular polyamines. In terms of biological role, part of the ABC transporter complex PotFGHI involved in putrescine uptake. Responsible for energy coupling to the transport system. Imports putrescine for maintenance of the optimal concentration of polyamines necessary for cell growth in the presence of glucose. In Escherichia coli (strain K12), this protein is Putrescine transport ATP-binding protein PotG.